We begin with the raw amino-acid sequence, 184 residues long: Elongation factor P (184 aa).

It belongs to the elongation factor P family.

The protein localises to the cytoplasm. It functions in the pathway protein biosynthesis; polypeptide chain elongation. Involved in peptide bond synthesis. Stimulates efficient translation and peptide-bond synthesis on native or reconstituted 70S ribosomes in vitro. Probably functions indirectly by altering the affinity of the ribosome for aminoacyl-tRNA, thus increasing their reactivity as acceptors for peptidyl transferase. In Delftia acidovorans (strain DSM 14801 / SPH-1), this protein is Elongation factor P.